The chain runs to 905 residues: Dopamine D2-like receptor (905 aa).

The segment at 1–23 is disordered; that stretch reads MLSPFDWRRGISSSGTGGTMAAQ. Residues 1 to 377 are Extracellular-facing; the sequence is MLSPFDWRRG…GELRVVDHNY (377 aa). N-linked (GlcNAc...) asparagine glycosylation is found at N88, N146, N156, N166, N174, N257, N314, and N343. A helical membrane pass occupies residues 378–398; it reads WALILILFPILTLFGNILVIL. The Cytoplasmic segment spans residues 399–416; that stretch reads SVCRERSLQTVTNYFIVS. A helical membrane pass occupies residues 417 to 437; the sequence is LAIADLLVAVVVMPFAVYFLV. Over 438 to 450 the chain is Extracellular; it reads NGAWALPDVVCDF. C448 and C525 are disulfide-bonded. A helical transmembrane segment spans residues 451 to 471; the sequence is YIAMDVICSTSSIFNLVAISI. The Cytoplasmic segment spans residues 472–493; the sequence is DRYIAVTQPIKYAKHKNSRRVC. A helical transmembrane segment spans residues 494 to 514; sequence LTILLVWAISAAIGSPIVLGL. The Extracellular segment spans residues 515–531; sequence NNTPNREPDVCAFYNAD. A helical transmembrane segment spans residues 532–552; it reads FILYSSLSSFYIPCIIMVFLY. Residues 553 to 830 are Cytoplasmic-facing; the sequence is WNIFKALRSR…AKKERKATKT (278 aa). 3 disordered regions span residues 600 to 631, 702 to 753, and 780 to 799; these read SRHA…ISPD, ATSA…SVGV, and DSTL…KNSQ. Over residues 702–722 the composition is skewed to low complexity; sequence ATSAAPRSSGSPPDSPLPSGA. The span at 723-734 shows a compositional bias: polar residues; sequence TLQRSSVSSQRR. Basic and acidic residues predominate over residues 735–746; the sequence is PTGDDSPKRGEP. The chain crosses the membrane as a helical span at residues 831-851; sequence LAIVLGVFLFCWLPFFSCNIM. Over 852–869 the chain is Extracellular; sequence DAMCAKFKKDCRPGLTAY. Residues 870–890 traverse the membrane as a helical segment; that stretch reads MMTTWLGYINSFVNPVIYTIF. Residues 891-905 lie on the Cytoplasmic side of the membrane; that stretch reads NPEFRKAFKKIMHMG.

The protein belongs to the G-protein coupled receptor 1 family. In terms of tissue distribution, highest expression is in adult heads.

It localises to the cell membrane. Receptor for dopamine. The activity of this receptor is mediated by G proteins which inhibit adenylyl cyclase. In Drosophila melanogaster (Fruit fly), this protein is Dopamine D2-like receptor.